The chain runs to 195 residues: NADH-quinone oxidoreductase subunit B (195 aa).

[4Fe-4S] cluster contacts are provided by Cys-74, Cys-75, Cys-139, and Cys-169.

This sequence belongs to the complex I 20 kDa subunit family. In terms of assembly, NDH-1 is composed of 14 different subunits. Subunits NuoB, C, D, E, F, and G constitute the peripheral sector of the complex. The cofactor is [4Fe-4S] cluster.

It localises to the cell inner membrane. The catalysed reaction is a quinone + NADH + 5 H(+)(in) = a quinol + NAD(+) + 4 H(+)(out). NDH-1 shuttles electrons from NADH, via FMN and iron-sulfur (Fe-S) centers, to quinones in the respiratory chain. The immediate electron acceptor for the enzyme in this species is believed to be ubiquinone. Couples the redox reaction to proton translocation (for every two electrons transferred, four hydrogen ions are translocated across the cytoplasmic membrane), and thus conserves the redox energy in a proton gradient. The chain is NADH-quinone oxidoreductase subunit B from Methylorubrum extorquens (strain PA1) (Methylobacterium extorquens).